The sequence spans 166 residues: SsrA-binding protein (166 aa).

Residues 143–166 (HDKREDDKRKQANRDMKSALARYR) are disordered. Residues 144-159 (DKREDDKRKQANRDMK) are compositionally biased toward basic and acidic residues.

Belongs to the SmpB family.

The protein localises to the cytoplasm. Required for rescue of stalled ribosomes mediated by trans-translation. Binds to transfer-messenger RNA (tmRNA), required for stable association of tmRNA with ribosomes. tmRNA and SmpB together mimic tRNA shape, replacing the anticodon stem-loop with SmpB. tmRNA is encoded by the ssrA gene; the 2 termini fold to resemble tRNA(Ala) and it encodes a 'tag peptide', a short internal open reading frame. During trans-translation Ala-aminoacylated tmRNA acts like a tRNA, entering the A-site of stalled ribosomes, displacing the stalled mRNA. The ribosome then switches to translate the ORF on the tmRNA; the nascent peptide is terminated with the 'tag peptide' encoded by the tmRNA and targeted for degradation. The ribosome is freed to recommence translation, which seems to be the essential function of trans-translation. This Prochlorococcus marinus (strain MIT 9211) protein is SsrA-binding protein.